The chain runs to 383 residues: Outer membrane protein assembly factor BamB (383 aa).

The signal sequence occupies residues 1–23 (MMLLKRCNRRALVALAAVLLLAA). Residue Cys-24 is the site of N-palmitoyl cysteine attachment. Residue Cys-24 is the site of S-diacylglycerol cysteine attachment.

Belongs to the BamB family. In terms of assembly, part of the Bam complex.

The protein localises to the cell outer membrane. Its function is as follows. Part of the outer membrane protein assembly complex, which is involved in assembly and insertion of beta-barrel proteins into the outer membrane. This chain is Outer membrane protein assembly factor BamB, found in Alkalilimnicola ehrlichii (strain ATCC BAA-1101 / DSM 17681 / MLHE-1).